The chain runs to 433 residues: tRNA-2-methylthio-N(6)-dimethylallyladenosine synthase (433 aa).

Positions 4-119 constitute an MTTase N-terminal domain; it reads KKLFIQTLGC…ITQAIKTPKF (116 aa). Cys13, Cys50, Cys82, Cys151, Cys155, and Cys158 together coordinate [4Fe-4S] cluster. One can recognise a Radical SAM core domain in the interval 137 to 370; sequence RNSIYKSYIN…QNRHSEILDE (234 aa). Residues 373 to 433 enclose the TRAM domain; that stretch reads KKQENKTFKV…KRMVLYGEII (61 aa).

It belongs to the methylthiotransferase family. MiaB subfamily. As to quaternary structure, monomer. [4Fe-4S] cluster is required as a cofactor.

The protein localises to the cytoplasm. It carries out the reaction N(6)-dimethylallyladenosine(37) in tRNA + (sulfur carrier)-SH + AH2 + 2 S-adenosyl-L-methionine = 2-methylsulfanyl-N(6)-dimethylallyladenosine(37) in tRNA + (sulfur carrier)-H + 5'-deoxyadenosine + L-methionine + A + S-adenosyl-L-homocysteine + 2 H(+). Catalyzes the methylthiolation of N6-(dimethylallyl)adenosine (i(6)A), leading to the formation of 2-methylthio-N6-(dimethylallyl)adenosine (ms(2)i(6)A) at position 37 in tRNAs that read codons beginning with uridine. The sequence is that of tRNA-2-methylthio-N(6)-dimethylallyladenosine synthase from Campylobacter jejuni subsp. doylei (strain ATCC BAA-1458 / RM4099 / 269.97).